A 911-amino-acid chain; its full sequence is Protein translocase subunit SecA (911 aa).

Residues Gln86, Gly104–Thr108, and Asp512 contribute to the ATP site. Zn(2+) contacts are provided by Cys895, Cys897, Cys906, and His907.

The protein belongs to the SecA family. In terms of assembly, monomer and homodimer. Part of the essential Sec protein translocation apparatus which comprises SecA, SecYEG and auxiliary proteins SecDF-YajC and YidC. It depends on Zn(2+) as a cofactor.

Its subcellular location is the cell inner membrane. The protein localises to the cytoplasm. It carries out the reaction ATP + H2O + cellular proteinSide 1 = ADP + phosphate + cellular proteinSide 2.. Its function is as follows. Part of the Sec protein translocase complex. Interacts with the SecYEG preprotein conducting channel. Has a central role in coupling the hydrolysis of ATP to the transfer of proteins into and across the cell membrane, serving both as a receptor for the preprotein-SecB complex and as an ATP-driven molecular motor driving the stepwise translocation of polypeptide chains across the membrane. In Bordetella bronchiseptica (strain ATCC BAA-588 / NCTC 13252 / RB50) (Alcaligenes bronchisepticus), this protein is Protein translocase subunit SecA.